We begin with the raw amino-acid sequence, 161 residues long: MIVLTRRIDESDTITGTVTLDVDSRIKSRLRVTLDDGREAGLMLERGHLLRGGELLADAAGSQVVRVLAAPEAVSTVRCSDPHLLARAAYHLGNRHVPLQIQPGLLRYQHDHVLDDMLRGLGLAVEAEQAPFEPEAGAYQSAPHSHSHAHDHPFVRLPAHS.

The disordered stretch occupies residues 133–161 (EPEAGAYQSAPHSHSHAHDHPFVRLPAHS).

Belongs to the UreE family.

The protein localises to the cytoplasm. Involved in urease metallocenter assembly. Binds nickel. Probably functions as a nickel donor during metallocenter assembly. This is Urease accessory protein UreE from Pseudomonas putida (strain W619).